Here is a 260-residue protein sequence, read N- to C-terminus: Small ribosomal subunit protein eS1 (260 aa).

The residue at position 2 (Ala-2) is an N-acetylalanine; partial.

The protein belongs to the eukaryotic ribosomal protein eS1 family. Component of the small ribosomal subunit. Mature ribosomes consist of a small (40S) and a large (60S) subunit. The 40S subunit contains about 33 different proteins and 1 molecule of RNA (18S). The 60S subunit contains about 49 different proteins and 3 molecules of RNA (25S, 5.8S and 5S).

It localises to the cytoplasm. In Mycosarcoma maydis (Corn smut fungus), this protein is Small ribosomal subunit protein eS1.